Reading from the N-terminus, the 1391-residue chain is Axoneme-associated protein mst101(2) (1391 aa).

Disordered stretches follow at residues 170 to 213 (ECNQ…GKKL) and 280 to 300 (SSEPKKKGKKKKNDEKKEKEL). A compositionally biased stretch (basic residues) spans 184–201 (TKKGKTKGKSGGGNKKRS). The segment covering 291–300 (KNDEKKEKEL) has biased composition (basic and acidic residues). 59 consecutive repeat copies span residues 332 to 347 (KKKCKDLGRKMKEEAE), 348 to 363 (KKKCAALAKKQKEEDE), 364 to 379 (KKACKELAKKKKEADE), 380 to 395 (KKKCEEAANKEKKAAE), 396 to 411 (KKKCEKAAKERKEAAE), 412 to 427 (KKKCEEAAKKEKEAAE), 428 to 443 (RKKCEELAKNIKKAAE), 444 to 459 (KKKCKEAAKKEKEAAE), 460 to 475 (RKKCEELAKKIKKAAE), 476 to 491 (KKKCEETAKKGKEVAE), 492 to 507 (RKKCEELAKKIKKAEI), 508 to 523 (KKKCKKLAKKEKETAE), 524 to 539 (KKKCEKAAKKRKEAAE), 540 to 555 (KKKCEKAAKKRKEAAE), 556 to 571 (KKKCEKSAKKRKEAAE), 572 to 587 (KKKCEKAAKERKEAAE), 588 to 603 (KKKCEEAAKKEKEVAE), 604 to 619 (RKKCEELAKKIKKAAE), 620 to 635 (KKKCKEAAKKEKEAAE), 636 to 651 (REKCGELAKKIKKAAE), 652 to 667 (KKKCKKLAKKEKETAE), 668 to 683 (KKKCEKAAKKRKEAAE), 684 to 699 (KKKCAEAAKKEKEAAE), 700 to 715 (KKKCEEAAKKEKEAAE), 716 to 731 (RKKCEELAKKIKKAAE), 732 to 747 (KKKCKKLAKKKKAGEK), 748 to 763 (NKLKKGNKKGKKALKE), 764 to 779 (KKKCRELAKKKAAEKK), 780 to 795 (KCKEAAKKEKEAAEKK), 796 to 811 (KCEKTAKKRKEEAEKK), 812 to 827 (KCEKTAKKRKEAAEKK), 828 to 843 (KCEKAAKKRKEEAEKK), 844 to 859 (KCEKTAKKRKETAEKK), 860 to 875 (KCEKAAKKRKQAAEKK), 876 to 891 (KCEKAAKKRKEAAEKK), 892 to 907 (KCAEAAKKEKELAEKK), 908 to 923 (KCEEAAKKEKEVAERK), 924 to 939 (KCEELAKKIKKAAEKK), 940 to 955 (KCKKLAKKEKKAGEKN), 956 to 971 (KLKKKAGKGKKKCKKL), 972 to 987 (GKKSKRAAEKKKCAEA), 988 to 1003 (AKKEKEAATKKKCEER), 1004 to 1019 (AKKQKEAAEKKQCEER), 1020 to 1035 (AKKLKEAAEQKQCEER), 1036 to 1051 (AKKLKEAAEKKQCEER), 1052 to 1067 (AKKLKEAAEQKQCEER), 1068 to 1083 (AKKLKEAAEKKQCEER), 1084 to 1099 (AKKEKEAAEKKQCEER), 1100 to 1115 (AKKLKEAAEKKQCEER), 1116 to 1131 (AKKEKEAAEKKRCEEA), 1132 to 1147 (AKREKEAAEKKKCAEA), 1148 to 1163 (AKKEKEATEKQKCAEA), 1164 to 1179 (AKKEKEAAEKKKCAEA), 1180 to 1195 (AKREKEAAQKKKCADL), 1196 to 1211 (AKKEQEPAEMKKCEEA), 1212 to 1227 (AKKEKEAAEKQKCAKA), 1228 to 1243 (AKKEKEAAEKKKCAEA), 1244 to 1259 (AKKEQEAAEKKKCAEA), and 1260 to 1275 (AKKEKEAEKKRKCEKA). The 59 X 16 AA approximate tandem repeats of [KR]-K-X-C-X-X-X-A-K-X-X-K-X-X-X-E stretch occupies residues 332-1275 (KKKCKDLGRK…AEKKRKCEKA (944 aa)). A disordered region spans residues 370-429 (LAKKKKEADEKKKCEEAANKEKKAAEKKKCEKAAKERKEAAEKKKCEEAAKKEKEAAERK). A disordered region spans residues 516–577 (KKEKETAEKK…EAAEKKKCEK (62 aa)). The segment covering 517 to 577 (KEKETAEKKK…EAAEKKKCEK (61 aa)) has biased composition (basic and acidic residues). A compositionally biased stretch (basic residues) spans 729 to 765 (AAEKKKCKKLAKKKKAGEKNKLKKGNKKGKKALKEKK). 3 disordered regions span residues 729 to 881 (AAEK…EKAA), 900 to 922 (EKELAEKKKCEEAAKKEKEVAER), and 934 to 1013 (KAAE…AAEK). The segment covering 766 to 881 (KCRELAKKKA…AEKKKCEKAA (116 aa)) has biased composition (basic and acidic residues). Composition is skewed to basic residues over residues 934–949 (KAAEKKKCKKLAKKEK) and 956–976 (KLKKKAGKGKKKCKKLGKKSK). Basic and acidic residues predominate over residues 977–1013 (RAAEKKKCAEAAKKEKEAATKKKCEERAKKQKEAAEK). Disordered regions lie at residues 1076–1095 (EKKQCEERAKKEKEAAEKKQ) and 1104–1212 (KEAA…EEAA). The span at 1353–1370 (KKEKEAAEKKKRCKDLAK) shows a compositional bias: basic and acidic residues. Residues 1353 to 1391 (KKEKEAAEKKKRCKDLAKNKKKGHKKKGRNENRKKRTDC) are disordered. The segment covering 1371–1391 (NKKKGHKKKGRNENRKKRTDC) has biased composition (basic residues).

As to expression, testis. Primary spermatocytes and early spermatids.

The protein resides in the cytoplasm. Functionally, possible structural role in the sperm tail. This Drosophila hydei (Fruit fly) protein is Axoneme-associated protein mst101(2) (mst101(2)).